A 206-amino-acid chain; its full sequence is MTKRTSAKYKIDRRMGENIWGRPKSPVNRREYGPGQHGQRRKGKLSDFGIQLRAKQKLKGYYGDLTEKQFRRIYGEAERVKGDTGENLIGLLERRLDAVVYRAKFVPTVFAARQFVNHGHVLVNGKRVNIPSYRVKEGDVIEVREKSKQNVAVLEAVQLAERDVPDYIEVDHSKLTATFVRAPGLADVPYPVVMEPNLVVEFYAKN.

Residues 18-46 (NIWGRPKSPVNRREYGPGQHGQRRKGKLS) are disordered. The S4 RNA-binding domain occupies 94–156 (RRLDAVVYRA…SKQNVAVLEA (63 aa)).

The protein belongs to the universal ribosomal protein uS4 family. As to quaternary structure, part of the 30S ribosomal subunit. Contacts protein S5. The interaction surface between S4 and S5 is involved in control of translational fidelity.

One of the primary rRNA binding proteins, it binds directly to 16S rRNA where it nucleates assembly of the body of the 30S subunit. In terms of biological role, with S5 and S12 plays an important role in translational accuracy. The chain is Small ribosomal subunit protein uS4 from Ruegeria sp. (strain TM1040) (Silicibacter sp.).